Here is a 276-residue protein sequence, read N- to C-terminus: Undecaprenyl-diphosphatase 1 (276 aa).

5 helical membrane-spanning segments follow: residues 83–103 (FTLNVVIATIPAIALGLLFEK), 108–128 (VLFSPVPVAFALVVGGAIILW), 187–207 (VATEFSFFLAIPIIFGATLYE), 217–237 (VDSLGLFALGLVAAFVSAFVC), and 252–272 (VFAWYRIAFGLFVLLVGYSGW).

This sequence belongs to the UppP family.

Its subcellular location is the cell inner membrane. The catalysed reaction is di-trans,octa-cis-undecaprenyl diphosphate + H2O = di-trans,octa-cis-undecaprenyl phosphate + phosphate + H(+). Its function is as follows. Catalyzes the dephosphorylation of undecaprenyl diphosphate (UPP). Confers resistance to bacitracin. The sequence is that of Undecaprenyl-diphosphatase 1 from Burkholderia cenocepacia (strain HI2424).